We begin with the raw amino-acid sequence, 442 residues long: Ribosomal protein uS12 methylthiotransferase RimO (442 aa).

In terms of domain architecture, MTTase N-terminal spans Arg13–Asp129. [4Fe-4S] cluster contacts are provided by Cys22, Cys58, Cys92, Cys153, Cys157, and Cys160. The Radical SAM core domain maps to Leu139–Lys369. The TRAM domain maps to Arg372–Asn439.

It belongs to the methylthiotransferase family. RimO subfamily. It depends on [4Fe-4S] cluster as a cofactor.

The protein resides in the cytoplasm. It catalyses the reaction L-aspartate(89)-[ribosomal protein uS12]-hydrogen + (sulfur carrier)-SH + AH2 + 2 S-adenosyl-L-methionine = 3-methylsulfanyl-L-aspartate(89)-[ribosomal protein uS12]-hydrogen + (sulfur carrier)-H + 5'-deoxyadenosine + L-methionine + A + S-adenosyl-L-homocysteine + 2 H(+). Functionally, catalyzes the methylthiolation of an aspartic acid residue of ribosomal protein uS12. The sequence is that of Ribosomal protein uS12 methylthiotransferase RimO from Chlorobium phaeobacteroides (strain BS1).